The following is a 489-amino-acid chain: Protein DETOXIFICATION 26 (489 aa).

Transmembrane regions (helical) follow at residues 42–62, 75–95, 125–145, 157–177, 190–210, 217–237, 271–291, 300–320, 342–362, 385–405, 416–436, and 442–462; these read IWYI…ILII, LAAI…LLLG, IILF…TPIL, LTGT…FFFP, VIAI…WFFV, IIGT…ILFL, IMLC…GNLV, LSIC…FFAG, IVSI…IVIF, VLLA…GVAV, INLG…GWIF, and GIWA…LIII.

Belongs to the multi antimicrobial extrusion (MATE) (TC 2.A.66.1) family.

It localises to the membrane. This chain is Protein DETOXIFICATION 26, found in Arabidopsis thaliana (Mouse-ear cress).